Reading from the N-terminus, the 292-residue chain is Mitochondrial fission regulator 1-like (292 aa).

A Phosphothreonine modification is found at Thr-30. A Phosphoserine modification is found at Ser-41. Residue Ser-103 is modified to Phosphoserine; by AMPK. Phosphoserine occurs at positions 110, 224, and 225. Residue Ser-238 is modified to Phosphoserine; by AMPK. Phosphoserine occurs at positions 261 and 273.

Belongs to the MTFR1 family. Phosphorylated by AMPK. Upon stress, phosphorylation at Ser-103 and Ser-238 by AMPK is sufficient to induce mitochondrial fragmentation.

It is found in the mitochondrion outer membrane. Its function is as follows. Mitochondrial protein required for adaptation of miochondrial dynamics to metabolic changes. Regulates mitochondrial morphology at steady state and mediates AMPK-dependent stress-induced mitochondrial fragmentation via the control of OPA1 levels. The protein is Mitochondrial fission regulator 1-like of Homo sapiens (Human).